We begin with the raw amino-acid sequence, 196 residues long: Phosphoheptose isomerase (196 aa).

In terms of domain architecture, SIS spans 36–196; it reads MTNCLINGGK…GIDALLLGVE (161 aa). 51–53 is a substrate binding site; the sequence is NGG. 2 residues coordinate Zn(2+): histidine 60 and glutamate 64. Residues glutamate 64, 93-94, 119-121, serine 124, and glutamine 174 each bind substrate; these read ND and STS. Residues glutamine 174 and histidine 182 each coordinate Zn(2+).

This sequence belongs to the SIS family. GmhA subfamily. As to quaternary structure, homotetramer. Zn(2+) serves as cofactor.

The protein resides in the cytoplasm. It carries out the reaction 2 D-sedoheptulose 7-phosphate = D-glycero-alpha-D-manno-heptose 7-phosphate + D-glycero-beta-D-manno-heptose 7-phosphate. The protein operates within carbohydrate biosynthesis; D-glycero-D-manno-heptose 7-phosphate biosynthesis; D-glycero-alpha-D-manno-heptose 7-phosphate and D-glycero-beta-D-manno-heptose 7-phosphate from sedoheptulose 7-phosphate: step 1/1. Functionally, catalyzes the isomerization of sedoheptulose 7-phosphate in D-glycero-D-manno-heptose 7-phosphate. This Dechloromonas aromatica (strain RCB) protein is Phosphoheptose isomerase.